The primary structure comprises 106 residues: Putative protein LRRC37A5P (106 aa).

This is Putative protein LRRC37A5P (LRRC37A5P) from Homo sapiens (Human).